We begin with the raw amino-acid sequence, 503 residues long: Depupylase (503 aa).

Positions 8 and 92 each coordinate Mg(2+). Asp-94 serves as the catalytic Proton acceptor. Mg(2+) is bound at residue Glu-99. Residue 101-102 (ST) coordinates ATP. His-155 is a Mg(2+) binding site. ATP is bound by residues Asn-157 and Arg-239. His-241 is a binding site for Mg(2+).

It belongs to the Pup ligase/Pup deamidase family. Pup deamidase subfamily. As to quaternary structure, likely interacts with the C-terminal half of the prokaryotic ubiquitin-like protein Pup. Requires ATP as cofactor.

The protein operates within protein degradation; proteasomal Pup-dependent pathway. Its function is as follows. Displays depupylase (DPUP) activity, removing conjugated Pup from target proteins; is thus involved in the recycling of Pup and may function similarly to deubiquitinases (DUBs) in eukaryotes to prevent or promote proteasomal degradation of certain proteins. Is also able to catalyze the deamidation of the C-terminal glutamine to glutamate in a variant of the prokaryotic ubiquitin-like protein Pup; however, since Pup from A.cellulolyticus possesses a C-terminal glutamate, this deamidase activity may be of no significance in vivo. The protein is Depupylase (dop) of Acidothermus cellulolyticus (strain ATCC 43068 / DSM 8971 / 11B).